The chain runs to 181 residues: Inner membrane-spanning protein YciB (181 aa).

A run of 5 helical transmembrane segments spans residues 10-30, 50-70, 80-100, 118-138, and 148-168; these read LVIF…GALI, MHLI…VFHD, IIYS…KSIL, VTWY…YVAF, and FKVF…VFYL.

It belongs to the YciB family.

The protein localises to the cell inner membrane. Plays a role in cell envelope biogenesis, maintenance of cell envelope integrity and membrane homeostasis. This chain is Inner membrane-spanning protein YciB, found in Shewanella baltica (strain OS223).